Reading from the N-terminus, the 397-residue chain is Growth-regulating factor 5 (397 aa).

Positions 16 to 51 (PFTPTQWEELEHQALIYKYMVSGVPVPPELIFSIRR) constitute a QLQ domain. 2 short sequence motifs (bipartite nuclear localization signal) span residues 78–96 (RKPDPEPGRCRRTDGKKWR) and 114–121 (RGRNRARK). One can recognise a WRC domain in the interval 81–125 (DPEPGRCRRTDGKKWRCSREAYPDSKYCEKHMHRGRNRARKSLDQ). Disordered regions lie at residues 108-172 (CEKH…SMDA), 197-217 (LDYPYPSTSPKQQQQTLHHAS), 288-320 (PYHHCSTDHNKIDHHHTYSSSSSSQHLHHDHDH), and 340-397 (VLAN…DTGS). Residues 111-120 (HMHRGRNRAR) are compositionally biased toward basic residues. The segment covering 128 to 172 (TTTTPLTSPSLSFTNNNNPSPTLSSSSSSNSSSTTYSASSSSMDA) has biased composition (low complexity). A compositionally biased stretch (basic and acidic residues) spans 288 to 298 (PYHHCSTDHNK).

Belongs to the GRF family. Interacts with GIF1. Strongly expressed in actively growing and developing tissues, such as roots, upper stems, and shoot tips containing the shoot apical meristem (SAM) and flower buds. Also expressed in mature flowers, but weakly expressed in mature stems and leaves.

It is found in the nucleus. Functionally, transcription activator that plays a role in the regulation of cell expansion in leaf and cotyledons tissues. Acts together with GIF1 for the development of appropriate leaf size and shape through the promotion and/or maintenance of cell proliferation activity in leaf primordia. In Arabidopsis thaliana (Mouse-ear cress), this protein is Growth-regulating factor 5 (GRF5).